The sequence spans 275 residues: Trypsin-4 (275 aa).

An N-terminal signal peptide occupies residues 1 to 18 (MSNKITILLAVLLAVVAC). The propeptide at 19 to 48 (AQAHASHQRRVPYPLPRFLPRPHHTVSNHR) is activation peptide. The Peptidase S1 domain occupies 49-274 (IVGGFEIDVA…VRDWIRETCG (226 aa)). Residues cysteine 74 and cysteine 90 are joined by a disulfide bond. Residues histidine 89 and aspartate 134 each act as charge relay system in the active site. Disulfide bonds link cysteine 199–cysteine 215 and cysteine 226–cysteine 250. Serine 230 functions as the Charge relay system in the catalytic mechanism.

Belongs to the peptidase S1 family. In terms of tissue distribution, expressed in the midgut. Expression levels drop a few hours after blood feeding and pick up again 28 hours later.

It is found in the secreted. The catalysed reaction is Preferential cleavage: Arg-|-Xaa, Lys-|-Xaa.. Constitutive trypsin that is expressed 2 days after emergence, coinciding with host seeking behavior of the female. In Anopheles gambiae (African malaria mosquito), this protein is Trypsin-4 (TRYP4).